The primary structure comprises 336 residues: MDQQSFPSFMASTHFDSSINRNDTRLRIFSGTANPALAQEIACYMGLQLGKIKIKRFADGEIYVQLQESVRGCDVFLVQPTCPPANENLMELLIMIDACRRASAKNITAVIPYFGYARADRKTQGRESIAAKLVANLITEAGANRVLACDLHSGQSMGYFDIPVDHVYGQPVILDYLASKTICSDDLVVVSPDVGGVARARAFAKKLSDAPLAIVDKRRHGHNVAEVMNLIGDVKGKVAVMVDDMIDTAGTISKGAALLHQEGAREVYACSTHAVFSPPAIERLSSGLFQEVIITNTIPVLEKNYFPQLTVLSVANLLGETIWRVHDDCSVSSIFQ.

Mg(2+)-binding residues include D150, H152, D161, and D165. Residues 236-251 (GKVAVMVDDMIDTAGT) are binding of phosphoribosylpyrophosphate.

The protein belongs to the ribose-phosphate pyrophosphokinase family.

The enzyme catalyses D-ribose 5-phosphate + ATP = 5-phospho-alpha-D-ribose 1-diphosphate + AMP + H(+). This Spinacia oleracea (Spinach) protein is Ribose-phosphate pyrophosphokinase 1 (PRS1).